The sequence spans 253 residues: Type III pantothenate kinase (253 aa).

Residue 6–13 coordinates ATP; that stretch reads DVGNTNTV. 103–106 provides a ligand contact to substrate; it reads GADR. D105 acts as the Proton acceptor in catalysis. A K(+)-binding site is contributed by D125. T128 serves as a coordination point for ATP. T180 contacts substrate.

This sequence belongs to the type III pantothenate kinase family. In terms of assembly, homodimer. It depends on NH4(+) as a cofactor. K(+) is required as a cofactor.

The protein localises to the cytoplasm. The catalysed reaction is (R)-pantothenate + ATP = (R)-4'-phosphopantothenate + ADP + H(+). It participates in cofactor biosynthesis; coenzyme A biosynthesis; CoA from (R)-pantothenate: step 1/5. Its function is as follows. Catalyzes the phosphorylation of pantothenate (Pan), the first step in CoA biosynthesis. The chain is Type III pantothenate kinase from Parafrankia sp. (strain EAN1pec).